The following is a 319-amino-acid chain: Nuclear hormone receptor family member nhr-174 (319 aa).

A DNA-binding region (nuclear receptor) is located at residues 7–81 (DPVCPVCEFP…AGMKRNLVRQ (75 aa)). 2 NR C4-type zinc fingers span residues 10–31 (CPVC…CGAC) and 47–63 (CEKK…CRAC). The NR LBD domain maps to 130 to 319 (EAEKDVSKIL…SMKKSRYLQF (190 aa)).

This sequence belongs to the nuclear hormone receptor family.

The protein resides in the nucleus. Orphan nuclear receptor. The polypeptide is Nuclear hormone receptor family member nhr-174 (nhr-174) (Caenorhabditis elegans).